The primary structure comprises 635 residues: Transcription termination factor FttA (635 aa).

2 KHa regions span residues 1–69 (MSAE…PSVL) and 4–69 (EDIL…PSVL). Residues 70-137 (VEPDIAKDKI…WAPKPVRTPP (68 aa)) are KHb. 2 metallo-beta-lactamase N-terminus regions span residues 179–382 (WVRT…YGGY) and 179–383 (WVRT…GGYD). 2 beta-Casp regions span residues 180-577 (VRTS…GFSG) and 383-576 (DDVL…EGFS). Residues H241, H243, D245, H246, H328, and D351 each contribute to the Zn(2+) site. 2 metallo-beta-lactamase C-terminus regions span residues 577-635 (GHSD…IRLR) and 578-635 (HSDR…IRLR). Residue H602 participates in Zn(2+) binding.

It belongs to the metallo-beta-lactamase superfamily. RNA-metabolizing metallo-beta-lactamase-like family. FttA subfamily. In terms of assembly, homodimer. Interacts with RNA polymerase (RNAP); interaction is not dependent on DNA or RNA. Interacts with the Spt4-Spt5 complex. Requires Zn(2+) as cofactor.

The protein localises to the chromosome. Terminates transcription on the whole genome. Termination is linked to FttA-mediated RNA cleavage and does not require NTP hydrolysis. Cleaves endonucleolytically at the RNA exit channel of RNA polymerase (RNAP); the 5'-3' exonuclease activity of this protein degrades the nascent RNA released from RNAP. In terms of biological role, terminates transcription genome-wide. Transcription termination is most effective in vivo on RNAs with more than one U4-tract in their 3'-ends (including non-protein coding RNAs); U4-tracts are recognized by this protein. Also plays a role in termination of RNAs without U-tracts by an unknown mechanism. Has endonuclease activity after U-rich tracts in transcription termination sites. Binds RNA at U4-tracts found directly upstream of the experimentally determined transcription termination sites; binds preferentially to RNAs with more U4-tracts at their 3'-ends. The polypeptide is Transcription termination factor FttA (Methanococcus maripaludis (strain DSM 14266 / JCM 13030 / NBRC 101832 / S2 / LL)).